The primary structure comprises 82 residues: Progonadoliberin-3 (82 aa).

A signal peptide spans M1–S23. At Q24 the chain carries Pyrrolidone carboxylic acid. A Glycine amide modification is found at G33.

The protein belongs to the GnRH family. Brain.

It localises to the secreted. Functionally, stimulates the secretion of gonadotropins. The polypeptide is Progonadoliberin-3 (gnrh3) (Oncorhynchus nerka (Sockeye salmon)).